We begin with the raw amino-acid sequence, 347 residues long: Phenylalanine--tRNA ligase alpha subunit (347 aa).

Residue glutamate 261 participates in Mg(2+) binding.

The protein belongs to the class-II aminoacyl-tRNA synthetase family. Phe-tRNA synthetase alpha subunit type 1 subfamily. As to quaternary structure, tetramer of two alpha and two beta subunits. Mg(2+) is required as a cofactor.

It is found in the cytoplasm. The catalysed reaction is tRNA(Phe) + L-phenylalanine + ATP = L-phenylalanyl-tRNA(Phe) + AMP + diphosphate + H(+). The protein is Phenylalanine--tRNA ligase alpha subunit of Streptococcus equi subsp. equi (strain 4047).